The primary structure comprises 449 residues: Type 3 secretion system ATPase (449 aa).

Gly178–Thr183 lines the ATP pocket.

The protein belongs to the ATPase alpha/beta chains family. T3SS ATPase subfamily. The core secretion machinery of the T3SS is composed of approximately 20 different proteins, including cytoplasmic components, a base, an export apparatus and a needle. This subunit is part of the cytosolic complex. Forms homododecamers. Comprises two hexameric rings that are probably stacked face-to-face by the association of their C-terminal domains. Also present as monomer and homohexamer in solution.

It is found in the cytoplasm. The enzyme catalyses ATP + H2O + cellular proteinSide 1 = ADP + phosphate + cellular proteinSide 2.. With respect to regulation, oligomerization increases ATPase activity. In terms of biological role, ATPase component of the type III secretion system (T3SS), also called injectisome, which is used to inject bacterial effector proteins into eukaryotic host cells. Acts as a molecular motor to provide the energy that is required for the export of proteins. Required for type III secretion apparatus (T3SA) formation, proper protein secretion, host cell invasion and virulence. May play a critical role in T3SS substrate recognition, disassembly of the effector/chaperone complex and unfolding of the effector in an ATP-dependent manner prior to secretion. In Pseudomonas savastanoi pv. phaseolicola (Pseudomonas syringae pv. phaseolicola), this protein is Type 3 secretion system ATPase.